The chain runs to 232 residues: Putative uridine kinase DAS2 (232 aa).

17-24 (GGHATGVG) serves as a coordination point for ATP.

The protein belongs to the uridine kinase family.

The protein localises to the cytoplasm. It is found in the nucleus. The enzyme catalyses uridine + ATP = UMP + ADP + H(+). It catalyses the reaction cytidine + ATP = CMP + ADP + H(+). It participates in pyrimidine metabolism; CTP biosynthesis via salvage pathway; CTP from cytidine: step 1/3. It functions in the pathway pyrimidine metabolism; UMP biosynthesis via salvage pathway; UMP from uridine: step 1/1. Functionally, putative uridine kinase identified in a screen for mutants with increased levels of rDNA transcription. The protein is Putative uridine kinase DAS2 (DAS2) of Saccharomyces cerevisiae (strain ATCC 204508 / S288c) (Baker's yeast).